Here is a 713-residue protein sequence, read N- to C-terminus: Nucleoporin NUP82 (713 aa).

Residues 1–409 (MSQSSRLSAL…SDLNPLAGLK (409 aa)) are interaction with NUP116. Positions 463–713 (TSISTEKSDT…VSQEFTTKTQ (251 aa)) are interaction with NSP1 and NUP159. The stretch at 582–713 (EAQNKKWDAQ…VSQEFTTKTQ (132 aa)) forms a coiled coil. The Bipartite nuclear localization signal motif lies at 607–623 (KKLSQIAESNKFKEKKI).

In terms of assembly, component of the nuclear pore complex (NPC). NPC constitutes the exclusive means of nucleocytoplasmic transport. NPCs allow the passive diffusion of ions and small molecules and the active, nuclear transport receptor-mediated bidirectional transport of macromolecules such as proteins, RNAs, ribonucleoparticles (RNPs), and ribosomal subunits across the nuclear envelope. Due to its 8-fold rotational symmetry, all subunits are present with 8 copies or multiples thereof. NUP82 is part of the NUP82 subcomplex. This subcomplex is the base for interactions with NUP116 and GLE2, with NUP42 and GLE1 and with DYN2.

It is found in the nucleus. Its subcellular location is the nuclear pore complex. It localises to the nucleus membrane. Functions as a component of the nuclear pore complex (NPC). NPC components, collectively referred to as nucleoporins (NUPs), can play the role of both NPC structural components and of docking or interaction partners for transiently associated nuclear transport factors. It is specifically involved as part of the NUP82-NUP159-NSP1 subcomplex in nuclear mRNA and pre-ribosome export by acting as a linker tethering nucleoporins that are directly involved in nuclear transport to the NPC via its coiled-coil domain. This Saccharomyces cerevisiae (strain ATCC 204508 / S288c) (Baker's yeast) protein is Nucleoporin NUP82 (NUP82).